A 131-amino-acid polypeptide reads, in one-letter code: Small ribosomal subunit protein uS8 (131 aa).

It belongs to the universal ribosomal protein uS8 family. As to quaternary structure, part of the 30S ribosomal subunit. Contacts proteins S5 and S12.

In terms of biological role, one of the primary rRNA binding proteins, it binds directly to 16S rRNA central domain where it helps coordinate assembly of the platform of the 30S subunit. The polypeptide is Small ribosomal subunit protein uS8 (Nitrosospira multiformis (strain ATCC 25196 / NCIMB 11849 / C 71)).